Here is a 220-residue protein sequence, read N- to C-terminus: MKAFDRPALTVLLVQGARDLSLNLSEAQITKLIDYLALMAKWNSVYNLTAVRDPVQMVTQHLLDSLAAVSAFSNAKNVLDVGAGGGLPGIVLAIWAAEAHPEMRISMIDTVHKKTAFLTQVKAELNLSNVSVYTARVEQWQAPQKFDVITSRAFADLSDFVNWSEHLLADGGQYIALKGVAPDTEVAGLPAGWQVREVRALQVPTLQAERHLVFIERTVL.

S-adenosyl-L-methionine contacts are provided by residues G82, L87, 137 to 138 (VE), and R152.

It belongs to the methyltransferase superfamily. RNA methyltransferase RsmG family.

Its subcellular location is the cytoplasm. It catalyses the reaction guanosine(527) in 16S rRNA + S-adenosyl-L-methionine = N(7)-methylguanosine(527) in 16S rRNA + S-adenosyl-L-homocysteine. In terms of biological role, specifically methylates the N7 position of guanine in position 527 of 16S rRNA. The sequence is that of Ribosomal RNA small subunit methyltransferase G from Janthinobacterium sp. (strain Marseille) (Minibacterium massiliensis).